The chain runs to 231 residues: NADH-ubiquinone oxidoreductase chain 4 (231 aa).

The next 6 membrane-spanning stretches (helical) occupy residues 1-21 (PIAG…YGII), 34-54 (TFLP…LTCL), 61-80 (SLIA…AIII), 84-106 (WGLS…LFCL), 118-138 (ILIL…WWLL), and 156-178 (LLIM…LSML).

The protein belongs to the complex I subunit 4 family.

The protein localises to the mitochondrion membrane. It carries out the reaction a ubiquinone + NADH + 5 H(+)(in) = a ubiquinol + NAD(+) + 4 H(+)(out). In terms of biological role, core subunit of the mitochondrial membrane respiratory chain NADH dehydrogenase (Complex I) that is believed to belong to the minimal assembly required for catalysis. Complex I functions in the transfer of electrons from NADH to the respiratory chain. The immediate electron acceptor for the enzyme is believed to be ubiquinone. This chain is NADH-ubiquinone oxidoreductase chain 4 (MT-ND4), found in Trimeresurus albolabris (White-lipped pit viper).